A 173-amino-acid polypeptide reads, in one-letter code: Ribosome maturation factor RimP (173 aa).

The protein belongs to the RimP family.

It is found in the cytoplasm. Functionally, required for maturation of 30S ribosomal subunits. The chain is Ribosome maturation factor RimP from Pelodictyon phaeoclathratiforme (strain DSM 5477 / BU-1).